The sequence spans 216 residues: MTFKLRETIKINHKKVQRIMQWLGLKGKCKTQKYRSYQGEVGHIADNLLQRDFTATQPNEKWTTDITEFKCAEGKLYLSPIKDLFNNEIIAYDLARSPNFEQITRMMKQAVARLEGAKPILHSDQGWQYQMIGYQNILRENGIQQSMSRKGNCLYNSAMESFFGRLKTECYYGKRFETFEQLEKTIHEYIHYYNHERIQGKLKGLSPVNYRTQSLN.

Residues 54 to 215 (TATQPNEKWT…SPVNYRTQSL (162 aa)) form the Integrase catalytic domain.

It belongs to the transposase IS3/IS150/IS904 family.

This is an uncharacterized protein from Haemophilus influenzae (strain ATCC 51907 / DSM 11121 / KW20 / Rd).